Here is a 415-residue protein sequence, read N- to C-terminus: Peptide chain release factor subunit 1-2 (415 aa).

This sequence belongs to the eukaryotic release factor 1 family. In terms of assembly, heterodimer of two subunits, one of which binds GTP.

The protein localises to the cytoplasm. Directs the termination of nascent peptide synthesis (translation) in response to the termination codons UAA, UAG and UGA. This is Peptide chain release factor subunit 1-2 from Methanosarcina acetivorans (strain ATCC 35395 / DSM 2834 / JCM 12185 / C2A).